Consider the following 262-residue polypeptide: MIDKTAVIHPSSIVEEGAVIGAGVHIGPFCFVGSQVEIGAGTELKSHVVVNGITKIGCDNQIYQFASIGEANQDLKYAGEPTRVEIGDRNRIRESVSIHRGTVQGGGLTKVGSDNLLMINAHIAHDCIIGDRCILANNATLGGHVEIDDFAIIGGMTAIHQFCVIGAHVMVGGCSGVAQDVPPFVIAQGNHATPFGINIEGLKRRGFDKESLHAIRNAYKLLYRSGRTLDEVKPEIAELAEQHSAVQAFIDFFARSTRGIIR.

It belongs to the transferase hexapeptide repeat family. LpxA subfamily. In terms of assembly, homotrimer.

Its subcellular location is the cytoplasm. It catalyses the reaction a (3R)-hydroxyacyl-[ACP] + UDP-N-acetyl-alpha-D-glucosamine = a UDP-3-O-[(3R)-3-hydroxyacyl]-N-acetyl-alpha-D-glucosamine + holo-[ACP]. It participates in glycolipid biosynthesis; lipid IV(A) biosynthesis; lipid IV(A) from (3R)-3-hydroxytetradecanoyl-[acyl-carrier-protein] and UDP-N-acetyl-alpha-D-glucosamine: step 1/6. Its function is as follows. Involved in the biosynthesis of lipid A, a phosphorylated glycolipid that anchors the lipopolysaccharide to the outer membrane of the cell. This is Acyl-[acyl-carrier-protein]--UDP-N-acetylglucosamine O-acyltransferase from Yersinia enterocolitica serotype O:8 / biotype 1B (strain NCTC 13174 / 8081).